A 91-amino-acid chain; its full sequence is Putative defensin-like protein 145 (91 aa).

The signal sequence occupies residues 1 to 26; the sequence is MNKNIIFSFTVLTLFVIFVQVTGVIG. 2 N-linked (GlcNAc...) asparagine glycosylation sites follow: Asn35 and Asn68. Disulfide bonds link Cys39-Cys84, Cys52-Cys74, Cys57-Cys78, and Cys61-Cys80.

Belongs to the DEFL family.

Its subcellular location is the secreted. The protein is Putative defensin-like protein 145 (LCR2) of Arabidopsis thaliana (Mouse-ear cress).